The primary structure comprises 88 residues: Hemotin (88 aa).

The Lumenal segment spans residues 1–14; that stretch reads MDCFKVFEVVFQSE. A helical membrane pass occupies residues 15-37; the sequence is INPLLLIPAVATIALTLCCYCYH. Topologically, residues 38-88 are cytoplasmic; the sequence is GYQWIRDRRTARIEEQQAQLPLPLSRISITPGCSMVATTKLTHSRNSVDIY.

As to quaternary structure, interacts with 14-3-3zeta. In terms of tissue distribution, expressed in hemocytes.

Its subcellular location is the early endosome membrane. Functionally, negatively regulates early endosome maturation by binding to and repressing the activity of 14-3-3zeta which prevents the 14-3-3zeta-mediated activation of phosphoinositide 3-kinase Pi3K68D. This, in turn, inhibits the Pi3K68D-mediated conversion of phosphatidylinositol to phosphatidylinositol-3-phosphate and prevents progression of early endosomes through the maturation process which regulates subsequent steps of phagocytic processing. The protein is Hemotin of Drosophila melanogaster (Fruit fly).